We begin with the raw amino-acid sequence, 415 residues long: Serine--tRNA ligase (415 aa).

Residue 231-233 (TAE) participates in L-serine binding. ATP is bound at residue 262-264 (RSE). An L-serine-binding site is contributed by Glu285. 349-352 (EISS) lines the ATP pocket. An L-serine-binding site is contributed by Ser383.

This sequence belongs to the class-II aminoacyl-tRNA synthetase family. Type-1 seryl-tRNA synthetase subfamily. In terms of assembly, homodimer. The tRNA molecule binds across the dimer.

Its subcellular location is the cytoplasm. It carries out the reaction tRNA(Ser) + L-serine + ATP = L-seryl-tRNA(Ser) + AMP + diphosphate + H(+). It catalyses the reaction tRNA(Sec) + L-serine + ATP = L-seryl-tRNA(Sec) + AMP + diphosphate + H(+). It functions in the pathway aminoacyl-tRNA biosynthesis; selenocysteinyl-tRNA(Sec) biosynthesis; L-seryl-tRNA(Sec) from L-serine and tRNA(Sec): step 1/1. Its function is as follows. Catalyzes the attachment of serine to tRNA(Ser). Is also able to aminoacylate tRNA(Sec) with serine, to form the misacylated tRNA L-seryl-tRNA(Sec), which will be further converted into selenocysteinyl-tRNA(Sec). The sequence is that of Serine--tRNA ligase from Helicobacter pylori (strain J99 / ATCC 700824) (Campylobacter pylori J99).